A 217-amino-acid polypeptide reads, in one-letter code: Large ribosomal subunit protein bL21m (217 aa).

Positions 61–81 are enriched in low complexity; the sequence is PPKVTTATTPEAPAAVPTSTP. The interval 61-87 is disordered; sequence PPKVTTATTPEAPAAVPTSTPFSQQPP.

The protein belongs to the bacterial ribosomal protein bL21 family. As to quaternary structure, component of the mitochondrial large ribosomal subunit (mt-LSU). Mature N.crassa 74S mitochondrial ribosomes consist of a small (37S) and a large (54S) subunit. The 37S small subunit contains a 16S ribosomal RNA (16S mt-rRNA) and 32 different proteins. The 54S large subunit contains a 23S rRNA (23S mt-rRNA) and 42 different proteins.

Its subcellular location is the mitochondrion. Component of the mitochondrial ribosome (mitoribosome), a dedicated translation machinery responsible for the synthesis of mitochondrial genome-encoded proteins, including at least some of the essential transmembrane subunits of the mitochondrial respiratory chain. The mitoribosomes are attached to the mitochondrial inner membrane and translation products are cotranslationally integrated into the membrane. In Neurospora crassa (strain ATCC 24698 / 74-OR23-1A / CBS 708.71 / DSM 1257 / FGSC 987), this protein is Large ribosomal subunit protein bL21m (mrpl49).